The sequence spans 87 residues: Spore morphogenesis and germination protein YwcE (87 aa).

3 consecutive transmembrane segments (helical) span residues 1–21, 26–46, and 56–76; these read MMDM…FIWL, VALS…FYAT, and LMII…FIIY.

This sequence belongs to the YwcE family.

Its subcellular location is the cell membrane. It is found in the spore membrane. The protein resides in the spore outer membrane. In terms of biological role, required for proper spore morphogenesis. Important for spore germination. This is Spore morphogenesis and germination protein YwcE (ywcE) from Bacillus subtilis (strain 168).